The sequence spans 264 residues: uncharacterized protein (264 aa).

An N-terminal signal peptide occupies residues 1-22 (MKRKLTICLLIALIFYNGNAKA). The chain crosses the membrane as a helical span at residues 227–247 (LLWVIITTGSIIITALTYVGY).

Its subcellular location is the membrane. This is an uncharacterized protein from Bacillus subtilis (strain 168).